A 377-amino-acid polypeptide reads, in one-letter code: Nitric oxide reductase FlRd-NAD(+) reductase (377 aa).

Belongs to the FAD-dependent oxidoreductase family. The cofactor is FAD.

The protein resides in the cytoplasm. The enzyme catalyses 2 reduced [nitric oxide reductase rubredoxin domain] + NAD(+) + H(+) = 2 oxidized [nitric oxide reductase rubredoxin domain] + NADH. It participates in nitrogen metabolism; nitric oxide reduction. Its function is as follows. One of at least two accessory proteins for anaerobic nitric oxide (NO) reductase. Reduces the rubredoxin moiety of NO reductase. The sequence is that of Nitric oxide reductase FlRd-NAD(+) reductase from Klebsiella pneumoniae (strain 342).